The chain runs to 208 residues: Large ribosomal subunit protein bL25 (208 aa).

The protein belongs to the bacterial ribosomal protein bL25 family. CTC subfamily. As to quaternary structure, part of the 50S ribosomal subunit; part of the 5S rRNA/L5/L18/L25 subcomplex. Contacts the 5S rRNA. Binds to the 5S rRNA independently of L5 and L18.

This is one of the proteins that binds to the 5S RNA in the ribosome where it forms part of the central protuberance. The protein is Large ribosomal subunit protein bL25 of Leptothrix cholodnii (strain ATCC 51168 / LMG 8142 / SP-6) (Leptothrix discophora (strain SP-6)).